We begin with the raw amino-acid sequence, 297 residues long: Oxidoreductase R1 (297 aa).

This sequence belongs to the asaB hydroxylase/desaturase family.

It participates in secondary metabolite biosynthesis. Its function is as follows. Oxidoreductase; part of the gene cluster that mediates the biosynthesis of squalestatin S1 (SQS1, also known as zaragozic acid A), a heavily oxidized fungal polyketide that offers potent cholesterol lowering activity by targeting squalene synthase (SS). SQS1 is composed of a 2,8-dioxobicyclic[3.2.1]octane-3,4,5-tricarboxyclic acid core that is connected to two lipophilic polyketide arms. These initial steps feature the priming of an unusual benzoic acid starter unit onto the highly reducing polyketide synthase pks2, followed by oxaloacetate extension and product release to generate a tricarboxylic acid containing product. The phenylalanine ammonia lyase (PAL) M7 and the acyl-CoA ligase M9 are involved in transforming phenylalanine into benzoyl-CoA. The citrate synthase-like protein R3 is involved in connecting the C-alpha-carbons of the hexaketide chain and oxaloacetate to afford the tricarboxylic acid unit. The potential hydrolytic enzymes, M8 and M10, are in close proximity to pks2 and may participate in product release. On the other side, the tetraketide arm is synthesized by a the squalestatin tetraketide synthase pks1 and enzymatically esterified to the core in the last biosynthetic step, by the acetyltransferase M4. The biosynthesis of the tetraketide must involve 3 rounds of chain extension. After the first and second rounds methyl-transfer occurs, and in all rounds of extension the ketoreductase and dehydratase are active. The enoyl reductase and C-MeT of pks1 are not active in the final round of extension. The acetyltransferase M4 appears to have a broad substrate selectivity for its acyl CoA substrate, allowing the in vitro synthesis of novel squalestatins. The biosynthesis of SQS1 requires several oxidative steps likely performed by oxidoreductases M1, R1 and R2. Finally, in support of the identification of the cluster as being responsible for SQS1 production, the cluster contains a gene encoding a putative squalene synthase (SS) R6, suggesting a likely mechanism for self-resistance. The polypeptide is Oxidoreductase R1 (Phoma sp. (strain ATCC 20986 / MF5453)).